Reading from the N-terminus, the 146-residue chain is UPF0178 protein LMOf2365_1475 (146 aa).

This sequence belongs to the UPF0178 family.

The sequence is that of UPF0178 protein LMOf2365_1475 from Listeria monocytogenes serotype 4b (strain F2365).